The following is a 63-amino-acid chain: Cytochrome c oxidase subunit 7C, mitochondrial (63 aa).

The N-terminal 16 residues, 1 to 16, are a transit peptide targeting the mitochondrion; it reads MLGHSIRRFTTSVVRR. Residues 17–33 are Mitochondrial matrix-facing; it reads SHYEEGPGKNLPFSVEN. Residue Lys25 is modified to N6-acetyllysine; alternate. Lys25 carries the post-translational modification N6-succinyllysine; alternate. The helical transmembrane segment at 34-60 threads the bilayer; that stretch reads KWTLLVKMCLFFGSAFSVPFLIVRHQL. Topologically, residues 61 to 63 are mitochondrial intermembrane; that stretch reads LKQ.

This sequence belongs to the cytochrome c oxidase VIIc family. In terms of assembly, component of the cytochrome c oxidase (complex IV, CIV), a multisubunit enzyme composed of 14 subunits. The complex is composed of a catalytic core of 3 subunits MT-CO1, MT-CO2 and MT-CO3, encoded in the mitochondrial DNA, and 11 supernumerary subunits COX4I, COX5A, COX5B, COX6A, COX6B, COX6C, COX7A, COX7B, COX7C, COX8 and NDUFA4, which are encoded in the nuclear genome. The complex exists as a monomer or a dimer and forms supercomplexes (SCs) in the inner mitochondrial membrane with NADH-ubiquinone oxidoreductase (complex I, CI) and ubiquinol-cytochrome c oxidoreductase (cytochrome b-c1 complex, complex III, CIII), resulting in different assemblies (supercomplex SCI(1)III(2)IV(1) and megacomplex MCI(2)III(2)IV(2)). Interacts with RAB5IF.

The protein localises to the mitochondrion inner membrane. It participates in energy metabolism; oxidative phosphorylation. Functionally, component of the cytochrome c oxidase, the last enzyme in the mitochondrial electron transport chain which drives oxidative phosphorylation. The respiratory chain contains 3 multisubunit complexes succinate dehydrogenase (complex II, CII), ubiquinol-cytochrome c oxidoreductase (cytochrome b-c1 complex, complex III, CIII) and cytochrome c oxidase (complex IV, CIV), that cooperate to transfer electrons derived from NADH and succinate to molecular oxygen, creating an electrochemical gradient over the inner membrane that drives transmembrane transport and the ATP synthase. Cytochrome c oxidase is the component of the respiratory chain that catalyzes the reduction of oxygen to water. Electrons originating from reduced cytochrome c in the intermembrane space (IMS) are transferred via the dinuclear copper A center (CU(A)) of subunit 2 and heme A of subunit 1 to the active site in subunit 1, a binuclear center (BNC) formed by heme A3 and copper B (CU(B)). The BNC reduces molecular oxygen to 2 water molecules using 4 electrons from cytochrome c in the IMS and 4 protons from the mitochondrial matrix. This Macaca fascicularis (Crab-eating macaque) protein is Cytochrome c oxidase subunit 7C, mitochondrial (COX7C).